Consider the following 436-residue polypeptide: UPF0597 protein YhaM (436 aa).

It belongs to the UPF0597 family.

Functionally, thought to be a D-serine dehydratase, however it does not complement a dsdA (D-serine dehydratase) mutant in strain CFT073, suggesting it may not have that function. This is UPF0597 protein YhaM from Escherichia coli O157:H7.